A 593-amino-acid chain; its full sequence is uncharacterized protein (593 aa).

Transmembrane regions (helical) follow at residues 21-41 (PAVFIPASVVIVAMIVVSVVY), 60-80 (VGWWYILVATGFVVFALYCGI), 97-117 (FSFWAWLAMLFSAGMGIGLVF), 148-168 (MALTVFHWGLHAWAIYVVVGL), 204-224 (VDVIAIVGTLFGVATSLGFGI), 243-263 (WMVGMIAAITATATASVVSGV), 275-295 (MALAAALALFVLLLGPTLFLL), 328-348 (WTIFYWGWWISWAPFVGMFIA), 359-379 (FIGAVLLVPTVIASLWFTIFG), 410-430 (GLPIGAITSVLAVLVIVFFFV), 457-477 (VYWAVLEGVAAAVLLLIGGAG), and 485-505 (AAIATALPFSIVMVVACYAMT).

This sequence belongs to the BCCT transporter (TC 2.A.15) family.

The protein resides in the cell membrane. This is an uncharacterized protein from Mycobacterium tuberculosis (strain CDC 1551 / Oshkosh).